We begin with the raw amino-acid sequence, 206 residues long: Small ribosomal subunit protein uS4 (206 aa).

One can recognise an S4 RNA-binding domain in the interval 96-156 (GRLDNVVYRM…EKAKKQSRVK (61 aa)).

It belongs to the universal ribosomal protein uS4 family. As to quaternary structure, part of the 30S ribosomal subunit. Contacts protein S5. The interaction surface between S4 and S5 is involved in control of translational fidelity.

In terms of biological role, one of the primary rRNA binding proteins, it binds directly to 16S rRNA where it nucleates assembly of the body of the 30S subunit. With S5 and S12 plays an important role in translational accuracy. The sequence is that of Small ribosomal subunit protein uS4 from Shigella flexneri.